A 31-amino-acid polypeptide reads, in one-letter code: Large ribosomal subunit protein bL21 (31 aa).

It belongs to the bacterial ribosomal protein bL21 family. In terms of assembly, part of the 50S ribosomal subunit. Contacts protein L20.

This protein binds to 23S rRNA in the presence of protein L20. The polypeptide is Large ribosomal subunit protein bL21 (rplU) (Streptococcus thermophilus).